Reading from the N-terminus, the 369-residue chain is Mycofactocin maturase MftC (369 aa).

The region spanning 16–232 is the Radical SAM core domain; that stretch reads LDAPICLTWE…KGERVLTGDS (217 aa). Cys30, Cys34, Cys37, Cys251, Cys258, Cys269, Cys310, Cys313, Cys319, Cys323, and Cys341 together coordinate [4Fe-4S] cluster. A disordered region spans residues 347-369; that stretch reads APALAQERHAPRPRVDHSRGSRE. Residues 352 to 369 show a composition bias toward basic and acidic residues; the sequence is QERHAPRPRVDHSRGSRE.

The protein belongs to the radical SAM superfamily. MftC family. Interacts with MftB. The cofactor is [4Fe-4S] cluster.

It carries out the reaction [mycofactocin precursor peptide]-C-terminal glycyl-L-valyl-L-tyrosine + S-adenosyl-L-methionine = [mycofactocin precursor peptide]-C-terminal glycyl-N-{[2-(4-hydroxyphenyl)ethenyl]-3-methylbutanamide} + 5'-deoxyadenosine + L-methionine + CO2. It catalyses the reaction [mycofactocin precursor peptide]-C-terminal glycyl-N-{[2-(4-hydroxyphenyl)ethenyl]-3-methylbutanamide} + AH2 + S-adenosyl-L-methionine = [mycofactocin precursor peptide]-C-terminal glycyl-N-{5-[(4-hydroxyphenyl)methyl]-4,4-dimethyl-2-oxopyrrolidin-3-yl}acetamide + 5'-deoxyadenosine + L-methionine + A + H(+). In terms of biological role, radical S-adenosylmethionine (SAM) enzyme responsible for the first step of the biosynthesis of the enzyme cofactor mycofactocin (MFT). Catalyzes two reactions at the C-terminus of the mycofactocin precursor (the MftA peptide). The first one is the oxidative decarboxylation of the C-terminal L-tyrosine of MftA, forming an unsaturated tyramine moiety. The second reaction is the cross-linking of the tyramine with the penultimate L-valine residue, forming a five-membered lactam ring. Its activity requires the presence of the MftB chaperone. The polypeptide is Mycofactocin maturase MftC (Mycobacterium ulcerans (strain Agy99)).